The primary structure comprises 456 residues: MGGWLGRQRRLLRMGAGRFGAPMERQGRAAATSAAVGESADSEARRRDPLRRRASSAAPSGSGEAESVRRERPGSLGGSTSAGRPRAEGLRKRRPLFPWFGLDIGGTLVKLVYFEPKDITAEEEKEEVESLKSIRKYLTSNVAYGSTGIRDVHLELKDLTLCGRKGNLHFIRFPTHDMPAFIQMGRDKNFSSLHTVFCATGGGSYKFEQDFLTIGDLQLRKLDELDCLIKGILYIDSVGFNGRSQCYYFENPADSEKCQKLPFDLKNPYPLLLVNIGSGVSILAVYSKDNYKRVTGTSLGGGTFFGLCCLLTGCSTFEEALEMASRGDSTKVDKLVRDIYGGDYERFGLPGWAVASSFGNMMSKEKREAASKEDLARATLITITNNIGSIARMCALNENINQVVFVGNFLRVNTIAMRLLAYALDYWSKGQLKALFSEHEGYFGAVGALLELLKIP.

The disordered stretch occupies residues 16–89; the sequence is AGRFGAPMER…TSAGRPRAEG (74 aa). Low complexity-rich tracts occupy residues 28–39 and 55–65; these read RAAATSAAVGES and SSAAPSGSGEA. Ser-55, Ser-56, and Ser-75 each carry phosphoserine. Residues 154 to 161 carry the Nuclear export signal motif; the sequence is LELKDLTL. Residue Glu-224 is the Proton acceptor of the active site. Residues Ser-278, Ser-281, and Arg-293 each contribute to the acetyl-CoA site.

This sequence belongs to the type II pantothenate kinase family. In terms of assembly, homodimer.

It localises to the cytoplasm. It is found in the cytosol. The enzyme catalyses (R)-pantothenate + ATP = (R)-4'-phosphopantothenate + ADP + H(+). It participates in cofactor biosynthesis; coenzyme A biosynthesis; CoA from (R)-pantothenate: step 1/5. Its activity is regulated as follows. Inhibited by acetyl-CoA. Inhibited by calcium hopantenate. Activated by palmitoylcarnitine. Functionally, catalyzes the phosphorylation of pantothenate to generate 4'-phosphopantothenate in the first and rate-determining step of coenzyme A (CoA) synthesis. This chain is Pantothenate kinase 2, mitochondrial (Pank2), found in Mus musculus (Mouse).